The sequence spans 449 residues: Phosphoglucosamine mutase (449 aa).

Serine 104 functions as the Phosphoserine intermediate in the catalytic mechanism. Positions 104, 243, 245, and 247 each coordinate Mg(2+). Serine 104 bears the Phosphoserine mark.

This sequence belongs to the phosphohexose mutase family. The cofactor is Mg(2+). Post-translationally, activated by phosphorylation.

The catalysed reaction is alpha-D-glucosamine 1-phosphate = D-glucosamine 6-phosphate. Catalyzes the conversion of glucosamine-6-phosphate to glucosamine-1-phosphate. This chain is Phosphoglucosamine mutase, found in Xanthomonas axonopodis pv. citri (strain 306).